The sequence spans 450 residues: MRTYWLFLLLGGVVSAESLLSPNKRSKEASMDEWTDQQKGIAMGHMLNNIGDSGMHAKDINPGCIIASPSTDSPDYYYQWVRDSALTIMTILDRFFEGDKGLEPIIVKYMDEMVRLQKVPNPSGDFYAGGLGEPKFNVDGTSYDGDWGRPQNDSPALRAIAFIKYMNYLFENGKEVHEVTVWIEAVLADLDYTANHWTEASFDLWEEIKDVHYFTLAVQKRAMQDGTAFAKRIGAPDQAALYQRTIEPIDLKLGEFWDPGMGVIKGYKGRVDRSGLDCSTLLASLYSNEFDMHILPTLLKLQETMTRDYPVNQGWKQAMGRYPEDVYDGVSKSIGNPWFICTSSAAEIIYKAIAYYDNKGLPELTEYNIHFFMKFAEFGDPYNWSVIRKNMHTYADNFLKAVAEFQHPNGSMSEQFSRDDGHQKGARDLTWSYSSLLNAIYRREAIKGSV.

The signal sequence occupies residues 1–16 (MRTYWLFLLLGGVVSA). Residues 17–28 (ESLLSPNKRSKE) constitute a propeptide that is removed on maturation. W147 provides a ligand contact to substrate. The active-site Proton acceptor is D203. E206 serves as the catalytic Proton donor. N383 and N409 each carry an N-linked (GlcNAc...) asparagine glycan.

The protein belongs to the glycosyl hydrolase 15 family.

The enzyme catalyses Hydrolysis of terminal (1-&gt;4)-linked alpha-D-glucose residues successively from non-reducing ends of the chains with release of beta-D-glucose.. The polypeptide is Probable glucoamylase (meu17) (Schizosaccharomyces pombe (strain 972 / ATCC 24843) (Fission yeast)).